The primary structure comprises 255 residues: tRNA (guanine-N(1)-)-methyltransferase (255 aa).

Residues Gly113 and 133–138 each bind S-adenosyl-L-methionine; that span reads IGDYVL.

This sequence belongs to the RNA methyltransferase TrmD family. Homodimer.

It localises to the cytoplasm. The catalysed reaction is guanosine(37) in tRNA + S-adenosyl-L-methionine = N(1)-methylguanosine(37) in tRNA + S-adenosyl-L-homocysteine + H(+). Specifically methylates guanosine-37 in various tRNAs. In Salmonella agona (strain SL483), this protein is tRNA (guanine-N(1)-)-methyltransferase.